The sequence spans 335 residues: Corrinoid adenosyltransferase PduO (335 aa).

H206 contacts heme.

Belongs to the Cob(I)alamin adenosyltransferase family. PduO subfamily. Forms a complex with PduS. Heme b is required as a cofactor. The cofactor is Mg(2+).

The protein resides in the bacterial microcompartment. It catalyses the reaction cob(I)alamin-[corrinoid adenosyltransferase] + ATP = apo-[corrinoid adenosyltransferase] + adenosylcob(III)alamin + triphosphate. It participates in polyol metabolism; 1,2-propanediol degradation. The protein operates within cofactor biosynthesis; adenosylcobalamin biosynthesis. Functionally, converts cob(I)alamin to adenosylcobalamin (adenosylcob(III)alamin), the cofactor for propanediol dehydratase. Found in the bacterial microcompartment (BMC) dedicated to 1,2-propanediol (1,2-PD) degradation. PduS and PduO allow regeneration of the adenosylcobalamin cofactor within the BMC. Its function is as follows. Expression of a cosmid containing the full 21-gene pdu operon in E.coli allows E.coli to grow on 1,2-propanediol (1,2-PD) with the appearance of bacterial microcompartments (BMC) in its cytoplasm. In terms of biological role, the 1,2-PD-specific bacterial microcompartment (BMC) concentrates low levels of 1,2-PD catabolic enzymes, concentrates volatile reaction intermediates thus enhancing pathway flux and keeps the level of toxic, mutagenic propionaldehyde low. The chain is Corrinoid adenosyltransferase PduO from Citrobacter freundii.